A 476-amino-acid chain; its full sequence is Light-independent protochlorophyllide reductase subunit N (476 aa).

3 residues coordinate [4Fe-4S] cluster: Cys-31, Cys-56, and Cys-116.

The protein belongs to the BchN/ChlN family. In terms of assembly, protochlorophyllide reductase is composed of three subunits; ChlL, ChlN and ChlB. Forms a heterotetramer of two ChlB and two ChlN subunits. Requires [4Fe-4S] cluster as cofactor.

Its subcellular location is the plastid. It localises to the chloroplast. The enzyme catalyses chlorophyllide a + oxidized 2[4Fe-4S]-[ferredoxin] + 2 ADP + 2 phosphate = protochlorophyllide a + reduced 2[4Fe-4S]-[ferredoxin] + 2 ATP + 2 H2O. It participates in porphyrin-containing compound metabolism; chlorophyll biosynthesis (light-independent). In terms of biological role, component of the dark-operative protochlorophyllide reductase (DPOR) that uses Mg-ATP and reduced ferredoxin to reduce ring D of protochlorophyllide (Pchlide) to form chlorophyllide a (Chlide). This reaction is light-independent. The NB-protein (ChlN-ChlB) is the catalytic component of the complex. In Staurastrum punctulatum (Green alga), this protein is Light-independent protochlorophyllide reductase subunit N.